A 381-amino-acid polypeptide reads, in one-letter code: Sulfite reductase, dissimilatory-type subunit beta (381 aa).

[4Fe-4S] cluster contacts are provided by Cys151, Cys188, Cys189, Cys193, Cys231, Cys258, Cys261, and Cys264. Cys193 is a binding site for siroheme. One can recognise a 4Fe-4S ferredoxin-type domain in the interval 249–276 (NTIAIKNERCMYCGNCYTMCPALPISDG).

As to quaternary structure, heterohexamer of two alpha, two beta and two gamma subunits. The cofactor is [4Fe-4S] cluster. Requires siroheme as cofactor.

It catalyses the reaction [DsrC protein]-trisulfide + NAD(+) + 3 H2O = [DsrC protein]-dithiol + sulfite + NADH + 3 H(+). In terms of biological role, catalyzes the reduction of sulfite to sulfide. This is the terminal oxidation reaction in sulfate respiration, a process catalyzed by the sulfate-reducing bacteria. The protein is Sulfite reductase, dissimilatory-type subunit beta (dsvB) of Nitratidesulfovibrio vulgaris (strain ATCC 29579 / DSM 644 / CCUG 34227 / NCIMB 8303 / VKM B-1760 / Hildenborough) (Desulfovibrio vulgaris).